Here is a 165-residue protein sequence, read N- to C-terminus: MATPPSSEDSADEGPSNIGEAKFPILEPPLPATICGLAKLLEIPLDDCLIPCNFCGNFLTHLEVCEFDEKKLTLIWKDHLVFACCRVCCSATATYEFNQFYESTVLGRDIEQVTGKSVFDIHVRCYTCMKFLDSIEKLDICGRKRPFYLVRGSWKGICRLCKHFQ.

Zinc fingers lie at residues 52–88 and 125–161; these read CNFC…CRVC and CYTC…CRLC.

Belongs to the papillomaviridae E6 protein family. In terms of assembly, forms homodimers. Interacts with ubiquitin-protein ligase UBE3A/E6-AP; this interaction stimulates UBE3A ubiquitin activity. Interacts with host BAK1.

It is found in the host cytoplasm. Its subcellular location is the host nucleus. Functionally, plays a major role in the induction and maintenance of cellular transformation. E6 associates with host UBE3A/E6-AP ubiquitin-protein ligase and modulates its activity. Protects host keratinocytes from apoptosis by mediating the degradation of host BAK1. May also inhibit host immune response. In Homo sapiens (Human), this protein is Protein E6.